Here is a 208-residue protein sequence, read N- to C-terminus: Uracil phosphoribosyltransferase (208 aa).

Residues Arg-78, Arg-103, and 130–138 (DPMLATGGS) each bind 5-phospho-alpha-D-ribose 1-diphosphate. Uracil contacts are provided by residues Ile-193 and 198 to 200 (GDA). A 5-phospho-alpha-D-ribose 1-diphosphate-binding site is contributed by Asp-199.

This sequence belongs to the UPRTase family. Requires Mg(2+) as cofactor.

The enzyme catalyses UMP + diphosphate = 5-phospho-alpha-D-ribose 1-diphosphate + uracil. It participates in pyrimidine metabolism; UMP biosynthesis via salvage pathway; UMP from uracil: step 1/1. Allosterically activated by GTP. In terms of biological role, catalyzes the conversion of uracil and 5-phospho-alpha-D-ribose 1-diphosphate (PRPP) to UMP and diphosphate. The chain is Uracil phosphoribosyltransferase from Shewanella piezotolerans (strain WP3 / JCM 13877).